A 298-amino-acid polypeptide reads, in one-letter code: Acetylglutamate kinase (298 aa).

Substrate is bound by residues 67–68 (GG), Arg-89, and Asn-193.

The protein belongs to the acetylglutamate kinase family. ArgB subfamily.

It localises to the cytoplasm. It carries out the reaction N-acetyl-L-glutamate + ATP = N-acetyl-L-glutamyl 5-phosphate + ADP. Its pathway is amino-acid biosynthesis; L-arginine biosynthesis; N(2)-acetyl-L-ornithine from L-glutamate: step 2/4. Catalyzes the ATP-dependent phosphorylation of N-acetyl-L-glutamate. The protein is Acetylglutamate kinase of Desulfitobacterium hafniense (strain DSM 10664 / DCB-2).